The sequence spans 95 residues: Large ribosomal subunit protein bL28 (95 aa).

The protein belongs to the bacterial ribosomal protein bL28 family.

The sequence is that of Large ribosomal subunit protein bL28 from Zymomonas mobilis subsp. mobilis (strain ATCC 31821 / ZM4 / CP4).